A 290-amino-acid polypeptide reads, in one-letter code: uncharacterized protein (290 aa).

The protein localises to the cell membrane. Its subcellular location is the membrane raft. This is an uncharacterized protein from Bacillus subtilis (strain 168).